The following is a 218-amino-acid chain: Large ribosomal subunit protein uL3 (218 aa).

N5-methylglutamine is present on Gln-154.

This sequence belongs to the universal ribosomal protein uL3 family. In terms of assembly, part of the 50S ribosomal subunit. Forms a cluster with proteins L14 and L19. Post-translationally, methylated by PrmB.

Its function is as follows. One of the primary rRNA binding proteins, it binds directly near the 3'-end of the 23S rRNA, where it nucleates assembly of the 50S subunit. This chain is Large ribosomal subunit protein uL3, found in Polynucleobacter asymbioticus (strain DSM 18221 / CIP 109841 / QLW-P1DMWA-1) (Polynucleobacter necessarius subsp. asymbioticus).